A 436-amino-acid chain; its full sequence is Histidine--tRNA ligase (436 aa).

The protein belongs to the class-II aminoacyl-tRNA synthetase family. Homodimer.

It is found in the cytoplasm. It carries out the reaction tRNA(His) + L-histidine + ATP = L-histidyl-tRNA(His) + AMP + diphosphate + H(+). This Prochlorococcus marinus (strain MIT 9303) protein is Histidine--tRNA ligase.